Reading from the N-terminus, the 219-residue chain is 2-C-methyl-D-erythritol 4-phosphate cytidylyltransferase (219 aa).

This sequence belongs to the IspD/TarI cytidylyltransferase family. IspD subfamily.

The enzyme catalyses 2-C-methyl-D-erythritol 4-phosphate + CTP + H(+) = 4-CDP-2-C-methyl-D-erythritol + diphosphate. It functions in the pathway isoprenoid biosynthesis; isopentenyl diphosphate biosynthesis via DXP pathway; isopentenyl diphosphate from 1-deoxy-D-xylulose 5-phosphate: step 2/6. Catalyzes the formation of 4-diphosphocytidyl-2-C-methyl-D-erythritol from CTP and 2-C-methyl-D-erythritol 4-phosphate (MEP). The protein is 2-C-methyl-D-erythritol 4-phosphate cytidylyltransferase of Bacteroides thetaiotaomicron (strain ATCC 29148 / DSM 2079 / JCM 5827 / CCUG 10774 / NCTC 10582 / VPI-5482 / E50).